Reading from the N-terminus, the 320-residue chain is Olfactory receptor 2W1 (320 aa).

The Extracellular segment spans residues 1–25; it reads MDQSNYSSLHGFILLGFSNHPKMEM. Residue asparagine 5 is glycosylated (N-linked (GlcNAc...) asparagine). A helical transmembrane segment spans residues 26–49; it reads ILSGVVAIFYLITLVGNTAIILAS. Topologically, residues 50-57 are cytoplasmic; sequence LLDSQLHT. The chain crosses the membrane as a helical span at residues 58–79; sequence PMYFFLRNLSFLDLCFTTSIIP. Over 80-100 the chain is Extracellular; that stretch reads QMLVNLWGPDKTISYVGCIIQ. Cysteine 97 and cysteine 189 are oxidised to a cystine. The helical transmembrane segment at 101 to 120 threads the bilayer; it reads LYVYMWLGSVECLLLAVMSY. Over 121–139 the chain is Cytoplasmic; that stretch reads DRFTAICKPLHYFVVMNPH. The chain crosses the membrane as a helical span at residues 140–158; sequence LCLKMIIMIWSISLANSVV. Over 159-195 the chain is Extracellular; sequence LCTLTLNLPTCGNNILDHFLCELPALVKIACVDTTTV. A helical transmembrane segment spans residues 196–219; the sequence is EMSVFALGIIIVLTPLILILISYG. Over 220-236 the chain is Cytoplasmic; the sequence is YIAKAVLRTKSKASQRK. Residues 237 to 259 traverse the membrane as a helical segment; that stretch reads AMNTCGSHLTVVSMFYGTIIYMY. Residues 260–272 lie on the Extracellular side of the membrane; the sequence is LQPGNRASKDQGK. The helical transmembrane segment at 273–292 threads the bilayer; sequence FLTLFYTVITPSLNPLIYTL. Over 293 to 320 the chain is Cytoplasmic; sequence RNKDMKDALKKLMRFHHKSTKIKRNCKS.

The protein belongs to the G-protein coupled receptor 1 family.

The protein localises to the cell membrane. Functionally, odorant receptor. This Homo sapiens (Human) protein is Olfactory receptor 2W1 (OR2W1).